Here is an 859-residue protein sequence, read N- to C-terminus: Bifunctional uridylyltransferase/uridylyl-removing enzyme (859 aa).

The uridylyltransferase stretch occupies residues 1 to 325 (MSAHAAPSPE…PATSGITRVL (325 aa)). Residues 326–682 (SHDRFVEKQG…ARPSPIGDAL (357 aa)) are uridylyl-removing. Residues 444–566 (VDQHILMVLR…VGNERYLTAL (123 aa)) enclose the HD domain. 2 ACT domains span residues 683-762 (QVLV…PEPS) and 791-859 (ILSV…AIAV).

This sequence belongs to the GlnD family. Mg(2+) serves as cofactor.

It carries out the reaction [protein-PII]-L-tyrosine + UTP = [protein-PII]-uridylyl-L-tyrosine + diphosphate. The enzyme catalyses [protein-PII]-uridylyl-L-tyrosine + H2O = [protein-PII]-L-tyrosine + UMP + H(+). Its activity is regulated as follows. Uridylyltransferase (UTase) activity is inhibited by glutamine, while glutamine activates uridylyl-removing (UR) activity. In terms of biological role, modifies, by uridylylation and deuridylylation, the PII regulatory proteins (GlnB and homologs), in response to the nitrogen status of the cell that GlnD senses through the glutamine level. Under low glutamine levels, catalyzes the conversion of the PII proteins and UTP to PII-UMP and PPi, while under higher glutamine levels, GlnD hydrolyzes PII-UMP to PII and UMP (deuridylylation). Thus, controls uridylylation state and activity of the PII proteins, and plays an important role in the regulation of nitrogen fixation and metabolism. The protein is Bifunctional uridylyltransferase/uridylyl-removing enzyme of Burkholderia vietnamiensis (strain G4 / LMG 22486) (Burkholderia cepacia (strain R1808)).